Here is a 170-residue protein sequence, read N- to C-terminus: Odorant-binding protein 2a (170 aa).

The N-terminal stretch at 1 to 15 (MKTLFLGVTLGLAAA) is a signal peptide. A disulfide bridge links cysteine 74 with cysteine 166.

It belongs to the calycin superfamily. Lipocalin family. As to quaternary structure, monomer. In terms of tissue distribution, strongly expressed in the nasal structures, salivary and lachrymal glands, and lung. Expressed in the liver.

It is found in the secreted. Its function is as follows. Binds and transports small hydrophobic volatile molecules with a higher affinity for aldehydes and large fatty acids, including undecanal, palmitic acid, efficient aldehydes, benzenic aldehydes, heterocyclic aldehydes and aliphatic acids. The protein is Odorant-binding protein 2a (OBP2A) of Homo sapiens (Human).